The following is a 51-amino-acid chain: Lantibiotic flavucin (51 aa).

Residues 1 to 20 (MSDFTLDFAEGDAADTVSPQ) constitute a propeptide that is removed on maturation. A cross-link (lanthionine (Ser-Cys)) is located at residues 23-27 (SKSLC). Cross-links (beta-methyllanthionine (Thr-Cys)) lie at residues 28–31 (TPGC), 33–38 (TGWMMC), and 42–45 (TKGC).

It belongs to the type A lantibiotic family. Post-translationally, maturation of lantibiotics involves the enzymatic conversion of Thr, and Ser into dehydrated AA and the formation of thioether bonds with cysteine. This is followed by membrane translocation and cleavage of the modified precursor.

Its activity is regulated as follows. Antimicrobial activity depends on the dehydration degree and integrity of flavucin. Its function is as follows. Lanthionine-containing peptide antibiotic (lantibiotic) active on certain Gram-positive bacteria. The bactericidal activity of lantibiotics is based on depolarization of energized bacterial cytoplasmic membranes, initiated by the formation of aqueous transmembrane pores. Flavucin has high antimicrobial activity against several pathogenic bacteria such as S.aureus, E.faecalis, E.faecium and L.monocytogenes. Is also active against the Gram-negative P.aeruginosa. This Corynebacterium lipophiloflavum (strain ATCC 700352 / DSM 44291 / CCUG 37336 / JCM 10383 / DMMZ 1944) protein is Lantibiotic flavucin.